A 113-amino-acid chain; its full sequence is MTDTHSIAQPFEAEVSPANNRQLTVSYAGRYPDYSRIPAITLKGQWLEVAGFATGTAVDVKVMEGCIVLTAQPPAAEEGELMQSLRQVCKLSARKQKQVQEFIGVIAGKQKVA.

The SpoVT-AbrB domain occupies 29-74 (GRYPDYSRIPAITLKGQWLEVAGFATGTAVDVKVMEGCIVLTAQPP).

This sequence belongs to the SymE family.

It is found in the cytoplasm. Its function is as follows. Involved in the degradation and recycling of damaged RNA. It is itself a target for degradation by the ATP-dependent protease Lon. The protein is Endoribonuclease SymE of Escherichia coli O7:K1 (strain IAI39 / ExPEC).